The following is a 651-amino-acid chain: Acetyl-coenzyme A synthetase (651 aa).

CoA-binding positions include 190 to 193 (RRGK) and Thr-311. ATP contacts are provided by residues 387–389 (GEP), 411–416 (DTWWQT), Asp-508, and Arg-523. Ser-531 serves as a coordination point for CoA. Residue Arg-534 coordinates ATP. 3 residues coordinate Mg(2+): Val-545, His-547, and Val-550. Lys-617 carries the N6-acetyllysine modification.

Belongs to the ATP-dependent AMP-binding enzyme family. Mg(2+) serves as cofactor. Post-translationally, acetylated. Deacetylation by the SIR2-homolog deacetylase activates the enzyme.

It carries out the reaction acetate + ATP + CoA = acetyl-CoA + AMP + diphosphate. Its function is as follows. Catalyzes the conversion of acetate into acetyl-CoA (AcCoA), an essential intermediate at the junction of anabolic and catabolic pathways. AcsA undergoes a two-step reaction. In the first half reaction, AcsA combines acetate with ATP to form acetyl-adenylate (AcAMP) intermediate. In the second half reaction, it can then transfer the acetyl group from AcAMP to the sulfhydryl group of CoA, forming the product AcCoA. M.tuberculosis may use AcsA for both acetate and propionate assimilation. This is Acetyl-coenzyme A synthetase from Mycobacterium tuberculosis (strain CDC 1551 / Oshkosh).